The chain runs to 356 residues: Ubiquitin-conjugating enzyme E2 Z (356 aa).

Positions 1 to 16 (MAESPTEEAATATAGA) are enriched in low complexity. Residues 1 to 22 (MAESPTEEAATATAGAGAAGPG) are disordered. One can recognise a UBC core domain in the interval 101–255 (QCLLRIKRDI…IRHETIRVAV (155 aa)). Cys190 serves as the catalytic Glycyl thioester intermediate. Residues 334–356 (NAEMDSDSSSSGTETDLHGSLRV) form a disordered region. Ser339 is subject to Phosphoserine.

The protein belongs to the ubiquitin-conjugating enzyme family.

The protein localises to the cytoplasm. The protein resides in the nucleus. It carries out the reaction S-ubiquitinyl-[E1 ubiquitin-activating enzyme]-L-cysteine + [E2 ubiquitin-conjugating enzyme]-L-cysteine = [E1 ubiquitin-activating enzyme]-L-cysteine + S-ubiquitinyl-[E2 ubiquitin-conjugating enzyme]-L-cysteine.. The protein operates within protein modification; protein ubiquitination. Catalyzes the covalent attachment of ubiquitin to other proteins. Specific substrate for UBA6, not charged with ubiquitin by UBE1. May be involved in apoptosis regulation. This chain is Ubiquitin-conjugating enzyme E2 Z (Ube2z), found in Rattus norvegicus (Rat).